The chain runs to 505 residues: Prenylcysteine oxidase 1 (505 aa).

Residues 1 to 27 (MGRVVAELVSSLLGLWLLLCSCGCPEG) form the signal peptide. 3 N-linked (GlcNAc...) asparagine glycosylation sites follow: Asn196, Asn323, and Asn353.

This sequence belongs to the prenylcysteine oxidase family. FAD is required as a cofactor. Widely expressed.

It is found in the lysosome. It carries out the reaction an S-polyprenyl-L-cysteine + O2 + H2O = a polyprenal + L-cysteine + H2O2. The enzyme catalyses S-(2E,6E)-farnesyl-L-cysteine + O2 + H2O = (2E,6E)-farnesal + L-cysteine + H2O2. The catalysed reaction is [(2E,6E,10E)-geranylgeranyl]-L-cysteine + O2 + H2O = (2E,6E,10E)-geranylgeranial + L-cysteine + H2O2. Its function is as follows. Prenylcysteine oxidase that cleaves the thioether bond of prenyl-L-cysteines, such as farnesylcysteine and geranylgeranylcysteine. Only active against free prenylcysteines and not prenylcysteine residues within prenylated proteins or peptides. Involved in the final step in the degradation of prenylated proteins, by degrading prenylcysteines after the protein has been degraded. This chain is Prenylcysteine oxidase 1, found in Homo sapiens (Human).